The primary structure comprises 265 residues: NAD kinase (265 aa).

The Proton acceptor role is filled by D45. Residues 45–46 (DG), 122–123 (NE), R148, D150, 161–166 (TAYSKS), and A185 contribute to the NAD(+) site.

The protein belongs to the NAD kinase family. Requires a divalent metal cation as cofactor.

It localises to the cytoplasm. It catalyses the reaction NAD(+) + ATP = ADP + NADP(+) + H(+). In terms of biological role, involved in the regulation of the intracellular balance of NAD and NADP, and is a key enzyme in the biosynthesis of NADP. Catalyzes specifically the phosphorylation on 2'-hydroxyl of the adenosine moiety of NAD to yield NADP. This chain is NAD kinase, found in Lactobacillus delbrueckii subsp. bulgaricus (strain ATCC 11842 / DSM 20081 / BCRC 10696 / JCM 1002 / NBRC 13953 / NCIMB 11778 / NCTC 12712 / WDCM 00102 / Lb 14).